The chain runs to 249 residues: Pleckstrin homology domain-containing family F member 2 (249 aa).

The region spanning Val35–Ser131 is the PH domain. An FYVE-type zinc finger spans residues Asp152 to Ser212. Positions 158, 161, 175, 178, 183, 186, 204, and 207 each coordinate Zn(2+). A compositionally biased stretch (polar residues) spans Cys219–Lys232. Residues Cys219–Asp249 form a disordered region. Acidic residues predominate over residues Ala238–Asp249.

The protein resides in the early endosome membrane. It is found in the endoplasmic reticulum. In terms of biological role, may play a role in early endosome fusion upstream of RAB5, hence regulating receptor trafficking and fluid-phase transport. Enhances cellular sensitivity to TNF-induced apoptosis. This is Pleckstrin homology domain-containing family F member 2 (PLEKHF2) from Gallus gallus (Chicken).